Reading from the N-terminus, the 1392-residue chain is MEDFFSFFDKPKDPLHFSAIRISVSSPEKIRERSFGEVKKPETINYRTFKPERDGLFCAKIFGPTKDYECNCGKYKRMKHRGIVCEKCGVEVIPSKVRRERLGHIDLATPVAHIWFLKSLPSRIGNLLDISLKDLEKVLYFEAYAVTDPKNTGMAMAEVLSEDRYLKALEEHNYQFEAGMGAAAIRDCLKAIDLDQLAEQLRQEMIEATSEAKRKKTAKRLKVVEAFKESGNRPEWMILECIPVLPPELRPLVPLDGGRFATSDLNDLYRRVINRNNRLKRLMELQAPEVIIRNEKRMLQEAVDALFDNGRRGRAIAGPNKRPLKSLSDMLKGKSGRFRQNLLGKRVDYSGRSVIVVGPELRLHQCGLPKKMALELFKPFIYNKLEERGFVTTIKSAKKMVEKERPEVWDVLEEVIKEHPVMLNRAPTLHRLGIQAFEPVLIEGKAIQLHPLVCTAFNADFDGDQMAVHLPLSIESQVEARVLMMSTNNILSPAHGKPIIVPSQDMVLGIYYMTRERHFAKGDGKIFASPEEVRIAYDAGEVDLQARISVRMKNILSAASEQPAIIETTVGRILLREILPEMVPFSSINKVMSKKELVNLIDVCYRLAGNKETVILADRLKETGFRYSTLAGISICMNDMVIPEGKSAIIDSANDEVKEIQNQYTEGLITDGERYNKVIDIWAKATEDIAKQMLDNLSKDTILSPDGQEVKIPSFNAIHMMADSGARGSAQQIRQLAGMRGLMAKPSGEIIETPITANFREGLNVLQYFISTHGARKGLADTALKTANSGYLTRRLVDVAQDAIITETDCGTLDGLTVTSLTEGGEVIEQIGDRILGRVALDDILDPVTGDVLVPANQEIDETLVKRIEDAGIERVKIRSVLTCQSRRGICAKCYGRDLARGHIVNMGEAVGVIAAQSIGEPGTQLTMRTFHIGGTASRHAEQTSLEARTEGRVKFININSVVNIEGHHIVMNRNGEVAIIDETGREREKYGIVYGAKIKFGPDQVVKPGETLAEWDPYTMPILTEVAGRVKFGDIVEGVTMEEQLDEVTGLSRKVIIESRDADKRPRIAIKASDPESASGGSTIGRYYLPVGANISVAEDSFVNAGDVIAKIPRETTKTKDITGGLPRVAELFEARKPKDFAVITEIDGVVTFGKDAKGKRKVIVTPELGEPKEYLIPKGKHISVHENDYVRAGEPLMDGSSNPHDILRVLGIKELAKYLVDEVQEVYRLQGVKINDKHIETIVRQMLRRVRIKEVGDTNLLIDDQLERWVFEEENERVIAKGGRPAIAEPLLLGITKASLSTESFISAASFQETTKVLTQAAIEGKVDQLRGLKENVIMGRLIPAGTGLSRYRNLKLVAEQAELLEPVAVAPPAVEEDYPEDDMLDDIEE.

Residues C70, C72, C85, and C88 each contribute to the Zn(2+) site. Mg(2+)-binding residues include D460, D462, and D464. C810, C884, C891, and C894 together coordinate Zn(2+).

The protein belongs to the RNA polymerase beta' chain family. As to quaternary structure, the RNAP catalytic core consists of 2 alpha, 1 beta, 1 beta' and 1 omega subunit. When a sigma factor is associated with the core the holoenzyme is formed, which can initiate transcription. Mg(2+) serves as cofactor. It depends on Zn(2+) as a cofactor.

The catalysed reaction is RNA(n) + a ribonucleoside 5'-triphosphate = RNA(n+1) + diphosphate. Its function is as follows. DNA-dependent RNA polymerase catalyzes the transcription of DNA into RNA using the four ribonucleoside triphosphates as substrates. The chain is DNA-directed RNA polymerase subunit beta' from Geobacter metallireducens (strain ATCC 53774 / DSM 7210 / GS-15).